Reading from the N-terminus, the 349-residue chain is NADH-ubiquinone oxidoreductase chain 2 (349 aa).

A run of 10 helical transmembrane segments spans residues 3–23 (PYVL…TFAS), 25–45 (HWLL…PIMA), 66–86 (AAAM…EWEI), 98–118 (VMLA…LPEV), 149–171 (INSS…GGLN), 178–197 (ILAY…LQYA), 202–219 (LLSL…FLTL), 240–260 (LAAL…LSGF), 274–294 (GLPL…YFYL), and 319–339 (FTLI…LLPL).

It belongs to the complex I subunit 2 family.

It is found in the mitochondrion inner membrane. It catalyses the reaction a ubiquinone + NADH + 5 H(+)(in) = a ubiquinol + NAD(+) + 4 H(+)(out). Functionally, core subunit of the mitochondrial membrane respiratory chain NADH dehydrogenase (Complex I) that is believed to belong to the minimal assembly required for catalysis. Complex I functions in the transfer of electrons from NADH to the respiratory chain. The immediate electron acceptor for the enzyme is believed to be ubiquinone. The polypeptide is NADH-ubiquinone oxidoreductase chain 2 (MT-ND2) (Salmo salar (Atlantic salmon)).